A 428-amino-acid polypeptide reads, in one-letter code: UDP-N-acetylglucosamine 1-carboxyvinyltransferase (428 aa).

A phosphoenolpyruvate-binding site is contributed by 25-26 (KN). UDP-N-acetyl-alpha-D-glucosamine is bound at residue arginine 102. Catalysis depends on cysteine 126, which acts as the Proton donor. The residue at position 126 (cysteine 126) is a 2-(S-cysteinyl)pyruvic acid O-phosphothioketal. 2 residues coordinate UDP-N-acetyl-alpha-D-glucosamine: aspartate 316 and valine 338.

Belongs to the EPSP synthase family. MurA subfamily.

It localises to the cytoplasm. It catalyses the reaction phosphoenolpyruvate + UDP-N-acetyl-alpha-D-glucosamine = UDP-N-acetyl-3-O-(1-carboxyvinyl)-alpha-D-glucosamine + phosphate. It functions in the pathway cell wall biogenesis; peptidoglycan biosynthesis. Functionally, cell wall formation. Adds enolpyruvyl to UDP-N-acetylglucosamine. This is UDP-N-acetylglucosamine 1-carboxyvinyltransferase from Anaplasma marginale (strain St. Maries).